Here is a 152-residue protein sequence, read N- to C-terminus: MLYLTQRIETPAAVTATLTLPIDVRVKSRAKVVLGDGREAGLLLPRGLLLRGGDRLSTEDGAEVVEIIAANEAVSVVRCADPFLLAKACYHLGNRHVPLQILPDELRYHHDHVLDDMLRQFSLEVTFAHLPFEPEAGAYASESHGHHHGHAH.

This sequence belongs to the UreE family.

Its subcellular location is the cytoplasm. Functionally, involved in urease metallocenter assembly. Binds nickel. Probably functions as a nickel donor during metallocenter assembly. The protein is Urease accessory protein UreE of Citrobacter koseri (strain ATCC BAA-895 / CDC 4225-83 / SGSC4696).